The primary structure comprises 507 residues: MNLLDPFMKMTDEQEKGLSGAPSPTMSEDSAGSPCPSGSGSDTENTRPQENTFPKGEPDLKKESEEDKFPVCIREAVSQVLKGYDWTLVPMPVRVNGSSKNKPHVKRPMNAFMVWAQAARRKLADQYPHLHNAELSKTLGKLWRLLNESEKRPFVEEAERLRVQHKKDHPDYKYQPRRRKSVKNGQAEAEEATEQTHISPNAIFKALQADSPHSSSGMSEVHSPGEHSGQSQGPPTPPTTPKTDVQAGKVDLKREGRPLAEGGRQPPIDFRDVDIGELSSDVISNIETFDVNEFDQYLPPNGHPGVPATHGQVSYTGSYGISSTAPTPATAGHVWMSKQQAPPPPPQQPPQAPQAPQAPPQQQAPPQPQQAPQQQQAHTLTTLSSEPGQSQRTHIKTEQLSPSHYSEQQQHSPQQISYSPFNLPHYNPSYPTITRSQYDYTDHQNSGSYYSHAAGQGSGLYSTFTYMNPAQRPMYTPIADTSGVPSIPQTHSPQHWEQPVYTQLTRP.

Disordered regions lie at residues 1–67 (MNLL…SEED) and 160–250 (RLRV…AGKV). Positions 30-41 (SAGSPCPSGSGS) are enriched in low complexity. The span at 42–52 (DTENTRPQENT) shows a compositional bias: polar residues. Composition is skewed to basic and acidic residues over residues 56-67 (GEPDLKKESEED) and 160-174 (RLRVQHKKDHPDYKY). Residues 63 to 103 (ESEEDKFPVCIREAVSQVLKGYDWTLVPMPVRVNGSSKNKP) are dimerization (DIM). The tract at residues 63-103 (ESEEDKFPVCIREAVSQVLKGYDWTLVPMPVRVNGSSKNKP) is PQA. S64 is subject to Phosphoserine. The segment at residues 105 to 173 (VKRPMNAFMV…QHKKDHPDYK (69 aa)) is a DNA-binding region (HMG box). Residue S211 is modified to Phosphoserine. The tract at residues 224-307 (PGEHSGQSQG…LPPNGHPGVP (84 aa)) is transactivation domain (TAM). Short sequence motifs (9aaTAD) lie at residues 275–284 (IGELSSDVIS) and 290–298 (DVNEFDQYL). Residues 335–429 (WMSKQQAPPP…PFNLPHYNPS (95 aa)) are disordered. A compositionally biased stretch (pro residues) spans 341 to 369 (APPPPPQQPPQAPQAPQAPPQQQAPPQPQ). Positions 378 to 420 (HTLTTLSSEPGQSQRTHIKTEQLSPSHYSEQQQHSPQQISYSP) are enriched in polar residues. The segment at 392–507 (RTHIKTEQLS…QPVYTQLTRP (116 aa)) is transactivation domain (TAC). A Glycyl lysine isopeptide (Lys-Gly) (interchain with G-Cter in ubiquitin) cross-link involves residue K396. The 9aaTAD 3 signature appears at 458–466 (SGLYSTFTY). The segment at 477–507 (PIADTSGVPSIPQTHSPQHWEQPVYTQLTRP) is disordered. The segment covering 483–507 (GVPSIPQTHSPQHWEQPVYTQLTRP) has biased composition (polar residues).

As to quaternary structure, homodimer; homodimerization is required for activity. Interacts (via C-terminus) with ZNF219; forming a complex that binds to the COL2A1 promoter and activates COL2A1 expression. Interacts with DDRGK1. Interacts with EP300/p300. Interacts with beta-catenin (CTNNB1); inhibiting CTNNB1 activity by competing with the binding sites of TCF/LEF within CTNNB1. Post-translationally, acetylated; acetylation impairs nuclear localization and ability to transactivate expression of target genes. Deacetylated by SIRT1. Phosphorylation at Ser-64 and Ser-211 by PKA increases transcriptional activity and may help delay chondrocyte maturation downstream of PTHLH/PTHrP signaling. Phosphorylation at either Ser-64 or Ser-211 is required for sumoylation, but phosphorylation is not dependent on sumoylation. Phosphorylated on tyrosine residues; tyrosine dephosphorylation by PTPN11/SHP2 blocks SOX9 phosphorylation by PKA and subsequent SUMOylation. In terms of processing, sumoylated; phosphorylation at either Ser-64 or Ser-211 is required for sumoylation. Sumoylation is induced by BMP signaling pathway. Post-translationally, ubiquitinated; ubiquitination leads to proteasomal degradation and is negatively regulated by DDRGK1.

It localises to the nucleus. In terms of biological role, transcription factor that plays a key role in chondrocytes differentiation and skeletal development. Specifically binds the 5'-ACAAAG-3' DNA motif present in enhancers and super-enhancers and promotes expression of genes important for chondrogenesis, including cartilage matrix protein-coding genes COL2A1, COL4A2, COL9A1, COL11A2 and ACAN, SOX5 and SOX6. Also binds to some promoter regions. Plays a central role in successive steps of chondrocyte differentiation. Absolutely required for precartilaginous condensation, the first step in chondrogenesis during which skeletal progenitors differentiate into prechondrocytes. Together with SOX5 and SOX6, required for overt chondrogenesis when condensed prechondrocytes differentiate into early stage chondrocytes, the second step in chondrogenesis. Later, required to direct hypertrophic maturation and block osteoblast differentiation of growth plate chondrocytes: maintains chondrocyte columnar proliferation, delays prehypertrophy and then prevents osteoblastic differentiation of chondrocytes by lowering beta-catenin (CTNNB1) signaling and RUNX2 expression. Also required for chondrocyte hypertrophy, both indirectly, by keeping the lineage fate of chondrocytes, and directly, by remaining present in upper hypertrophic cells and transactivating COL10A1 along with MEF2C. Low lipid levels are the main nutritional determinant for chondrogenic commitment of skeletal progenitor cells: when lipids levels are low, FOXO (FOXO1 and FOXO3) transcription factors promote expression of SOX9, which induces chondrogenic commitment and suppresses fatty acid oxidation. Mechanistically, helps, but is not required, to remove epigenetic signatures of transcriptional repression and deposit active promoter and enhancer marks at chondrocyte-specific genes. Acts in cooperation with the Hedgehog pathway-dependent GLI (GLI1 and GLI3) transcription factors. In addition to cartilage development, also acts as a regulator of proliferation and differentiation in epithelial stem/progenitor cells: involved in the lung epithelium during branching morphogenesis, by balancing proliferation and differentiation and regulating the extracellular matrix. Controls epithelial branching during kidney development. This Rattus norvegicus (Rat) protein is Transcription factor SOX-9.